Reading from the N-terminus, the 462-residue chain is Argininosuccinate lyase (462 aa).

Belongs to the lyase 1 family. Argininosuccinate lyase subfamily.

The protein localises to the cytoplasm. It carries out the reaction 2-(N(omega)-L-arginino)succinate = fumarate + L-arginine. The protein operates within amino-acid biosynthesis; L-arginine biosynthesis; L-arginine from L-ornithine and carbamoyl phosphate: step 3/3. The protein is Argininosuccinate lyase of Methylobacterium sp. (strain 4-46).